We begin with the raw amino-acid sequence, 337 residues long: Cytoskeleton protein RodZ (337 aa).

The Cytoplasmic segment spans residues 1 to 111 (MNTEATHDQN…LGKRRKKRDG (111 aa)). An HTH cro/C1-type domain is found at 19–71 (LRNAREQLGLSQQAVAERLCLKVSTVRDIEEDKAPADLASTFLRGYIRSYARL). Positions 30-49 (QQAVAERLCLKVSTVRDIEE) form a DNA-binding region, H-T-H motif. The chain crosses the membrane as a helical; Signal-anchor for type II membrane protein span at residues 112–132 (WLMTFTWLVLFVVIGLSGAWW). Topologically, residues 133–337 (WQDHKAQQEE…TLNAEQSPAQ (205 aa)) are periplasmic. Residues 145 to 167 (TMADQSSAELSSNSEQGQSVPLN) show a composition bias toward polar residues. Positions 145–235 (TMADQSSAEL…PTAATTPDGA (91 aa)) are disordered. A compositionally biased stretch (low complexity) spans 168–207 (TSTTTDPATTSTPPASVDTTATNTQTPAVTAPAPAVDPQQ). Residues 208–218 (NAVVSPSQANV) are compositionally biased toward polar residues. The span at 219–235 (DTAATPAPTAATTPDGA) shows a compositional bias: low complexity.

Belongs to the RodZ family.

The protein localises to the cell inner membrane. Cytoskeletal protein that is involved in cell-shape control through regulation of the length of the long axis. The sequence is that of Cytoskeleton protein RodZ from Shigella boydii serotype 4 (strain Sb227).